Here is a 525-residue protein sequence, read N- to C-terminus: Bifunctional purine biosynthesis protein PurH (525 aa).

One can recognise an MGS-like domain in the interval 10-156 (HRIPIRRALV…KNHPSVAIVT (147 aa)).

The protein belongs to the PurH family.

The enzyme catalyses (6R)-10-formyltetrahydrofolate + 5-amino-1-(5-phospho-beta-D-ribosyl)imidazole-4-carboxamide = 5-formamido-1-(5-phospho-D-ribosyl)imidazole-4-carboxamide + (6S)-5,6,7,8-tetrahydrofolate. The catalysed reaction is IMP + H2O = 5-formamido-1-(5-phospho-D-ribosyl)imidazole-4-carboxamide. The protein operates within purine metabolism; IMP biosynthesis via de novo pathway; 5-formamido-1-(5-phospho-D-ribosyl)imidazole-4-carboxamide from 5-amino-1-(5-phospho-D-ribosyl)imidazole-4-carboxamide (10-formyl THF route): step 1/1. Its pathway is purine metabolism; IMP biosynthesis via de novo pathway; IMP from 5-formamido-1-(5-phospho-D-ribosyl)imidazole-4-carboxamide: step 1/1. The protein is Bifunctional purine biosynthesis protein PurH of Nocardioides sp. (strain ATCC BAA-499 / JS614).